Reading from the N-terminus, the 339-residue chain is Putative ABC transporter ATP-binding protein MG467 homolog (339 aa).

The interval 41–87 (KKTKKAKPAKVKKVKEPKAKAVKPEQVKPTKTTKAPKPKKPKKQGGL) is disordered. The segment covering 42–53 (KTKKAKPAKVKK) has biased composition (basic residues). Residues 54-68 (VKEPKAKAVKPEQVK) show a composition bias toward basic and acidic residues. A compositionally biased stretch (basic residues) spans 74–83 (KAPKPKKPKK). Residues 112–338 (ISIDKMWKHV…IVSNELVRPL (227 aa)) form the ABC transporter domain. An ATP-binding site is contributed by 150–157 (GPSGSGKT).

This sequence belongs to the ABC transporter superfamily.

In Mycoplasma pneumoniae (strain ATCC 29342 / M129 / Subtype 1) (Mycoplasmoides pneumoniae), this protein is Putative ABC transporter ATP-binding protein MG467 homolog.